Consider the following 397-residue polypeptide: Acetate kinase 2 (397 aa).

Asn-8 is a binding site for Mg(2+). Residue Lys-15 participates in ATP binding. Arg-89 is a binding site for substrate. The active-site Proton donor/acceptor is the Asp-146. ATP contacts are provided by residues 206-210 (HLGNG), 281-283 (DFR), and 329-333 (GVGEN). Position 380 (Glu-380) interacts with Mg(2+).

It belongs to the acetokinase family. Homodimer. It depends on Mg(2+) as a cofactor. The cofactor is Mn(2+).

Its subcellular location is the cytoplasm. It catalyses the reaction acetate + ATP = acetyl phosphate + ADP. Its pathway is metabolic intermediate biosynthesis; acetyl-CoA biosynthesis; acetyl-CoA from acetate: step 1/2. Its function is as follows. Catalyzes the formation of acetyl phosphate from acetate and ATP. Can also catalyze the reverse reaction. The chain is Acetate kinase 2 from Listeria monocytogenes serovar 1/2a (strain ATCC BAA-679 / EGD-e).